A 604-amino-acid polypeptide reads, in one-letter code: Linalool synthase Tps-5042L13, chloroplastic (604 aa).

The N-terminal 34 residues, 1 to 34 (MSSMRIYVAIMKKPSVKHVDNVDKKASKPSWRVS), are a transit peptide targeting the chloroplast. (2E)-geranyl diphosphate is bound by residues Arg-323, Asp-360, Asp-364, Arg-501, and Asp-504. Residues Asp-360 and Asp-364 each contribute to the Mg(2+) site. A DDXXD motif motif is present at residues 360-364 (DDVYD). Asp-504, Thr-508, and Glu-512 together coordinate Mg(2+).

This sequence belongs to the terpene synthase family. Tpsb subfamily. As to quaternary structure, monomer. Requires Mg(2+) as cofactor. Mn(2+) serves as cofactor.

It is found in the plastid. The protein localises to the chloroplast. The enzyme catalyses (2E)-geranyl diphosphate + H2O = linalool + diphosphate. Its pathway is secondary metabolite biosynthesis; terpenoid biosynthesis. Functionally, monoterpene synthase (mono-TPS) involved in the biosynthesis of monoterpenes natural products. Catalyzes the conversion of (2E)-geranyl diphosphate (GPP) into linalool. The chain is Linalool synthase Tps-5042L13, chloroplastic from Perilla frutescens (Beefsteak mint).